The sequence spans 111 residues: Ig kappa chain V-III region PC 6684 (111 aa).

Residues 1–23 form a framework-1 region; sequence DIVLTQSPASLAVSLGQRATISC. The cysteines at positions 23 and 92 are disulfide-linked. A complementarity-determining-1 region spans residues 24 to 38; it reads RASKSVSTSGYSYMH. A framework-2 region spans residues 39 to 53; that stretch reads WYQQKPGQPPKLLIY. Residues 54-60 form a complementarity-determining-2 region; it reads LASNLES. The tract at residues 61 to 92 is framework-3; the sequence is GVPARFSGSGSGTDFTLNIHPVEEEDAATYYC. The segment at 93–101 is complementarity-determining-3; that stretch reads QHSRELPRT. The tract at residues 102–111 is framework-4; that stretch reads FGGGTKLEIK.

In Mus musculus (Mouse), this protein is Ig kappa chain V-III region PC 6684.